A 99-amino-acid polypeptide reads, in one-letter code: Beta-defensin 127 (99 aa).

The first 20 residues, 1–20 (MGLFMIIAILLFQKPTVTEQ), serve as a signal peptide directing secretion. 3 cysteine pairs are disulfide-bonded: C24/C53, C33/C47, and C37/C54. Positions 66-99 (ITKPPRPKPATLALTLQDYVTIIENFPSLKTQST) are excised as a propeptide.

Belongs to the beta-defensin family.

The protein localises to the secreted. Has antibacterial activity. This Homo sapiens (Human) protein is Beta-defensin 127 (DEFB127).